Reading from the N-terminus, the 361-residue chain is Protein-L-isoaspartate O-methyltransferase domain-containing protein 2 (361 aa).

Glycine 2 is lipidated: N-myristoyl glycine. Serine 64 is an active-site residue. 3 adoMet binding motif regions span residues 85–94 (LNLGSGTGYL), 160–164 (YDRVY), and 181–191 (LKVGGILVMPL). Positions 240 to 250 (VRSLQDLARIA) are BC-box. Residues 303–312 (SNPSDDNSSG) are compositionally biased toward polar residues. The tract at residues 303-335 (SNPSDDNSSGDLEEERREEEATTPPDAKPEPPV) is disordered. A CUL-box region spans residues 345 to 348 (LPLP).

The protein belongs to the methyltransferase superfamily. L-isoaspartyl/D-aspartyl protein methyltransferase family.

Its subcellular location is the cytoplasm. May act as a substrate recognition component of an ECS (Elongin BC-CUL5-SOCS-box protein) E3 ubiquitin ligase complex which mediates the ubiquitination and subsequent proteasomal degradation of target proteins. May bind to the methyltransferase cofactor S-adenosylmethionine (AdoMet) via the N-terminal AdoMet binding motif, but probably does not display methyltransferase activity. The chain is Protein-L-isoaspartate O-methyltransferase domain-containing protein 2 (PCMTD2) from Bos taurus (Bovine).